Consider the following 314-residue polypeptide: Olfactory receptor 2Z1 (314 aa).

Residues Met-1 to Gln-25 are Extracellular-facing. A glycan (N-linked (GlcNAc...) asparagine) is linked at Asn-5. The chain crosses the membrane as a helical span at residues Leu-26–Ile-49. Residues Arg-50–Thr-57 are Cytoplasmic-facing. Residues Pro-58–Pro-79 form a helical membrane-spanning segment. Residues Lys-80 to Gln-100 are Extracellular-facing. The chain crosses the membrane as a helical span at residues Ile-101–Tyr-120. The Cytoplasmic portion of the chain corresponds to Asp-121–Gln-139. Residues Val-140–Ile-158 form a helical membrane-spanning segment. Residues Gln-159–Tyr-195 are Extracellular-facing. A helical membrane pass occupies residues Glu-196 to Gly-219. Topologically, residues His-220 to Lys-236 are cytoplasmic. A helical membrane pass occupies residues Ala-237–Tyr-259. Residues Met-260–Asn-272 are Extracellular-facing. A helical transmembrane segment spans residues Val-273–Leu-292. The Cytoplasmic portion of the chain corresponds to Arg-293–Cys-314.

This sequence belongs to the G-protein coupled receptor 1 family.

It is found in the cell membrane. Its function is as follows. Odorant receptor. The sequence is that of Olfactory receptor 2Z1 (OR2Z1) from Homo sapiens (Human).